Consider the following 132-residue polypeptide: Phosphoribosyl-ATP pyrophosphatase (132 aa).

Belongs to the PRA-PH family.

The protein resides in the cytoplasm. It catalyses the reaction 1-(5-phospho-beta-D-ribosyl)-ATP + H2O = 1-(5-phospho-beta-D-ribosyl)-5'-AMP + diphosphate + H(+). It functions in the pathway amino-acid biosynthesis; L-histidine biosynthesis; L-histidine from 5-phospho-alpha-D-ribose 1-diphosphate: step 2/9. In Acidovorax sp. (strain JS42), this protein is Phosphoribosyl-ATP pyrophosphatase.